Reading from the N-terminus, the 520-residue chain is Ribonuclease Y (520 aa).

Residues 3 to 23 (IEIAIVLILAAAGLGYFVGNM) form a helical membrane-spanning segment. Residues 210-273 (SVSVVALPSD…EVAKIALEKL (64 aa)) form the KH domain. One can recognise an HD domain in the interval 336–429 (VYQHSLEVAF…VQAADALSGA (94 aa)).

Belongs to the RNase Y family.

It is found in the cell membrane. Functionally, endoribonuclease that initiates mRNA decay. This Geobacter metallireducens (strain ATCC 53774 / DSM 7210 / GS-15) protein is Ribonuclease Y.